A 128-amino-acid chain; its full sequence is Small ribosomal subunit protein uS12 (128 aa).

A disordered region spans residues 1–25; that stretch reads MPTIQQLIRRGRKTKASKTASPALE. Asp-89 carries the 3-methylthioaspartic acid modification. The tract at residues 101–128 is disordered; it reads SLDTSGVADRRNSRSKYGAKRPKEAAAK.

Belongs to the universal ribosomal protein uS12 family. As to quaternary structure, part of the 30S ribosomal subunit. Contacts proteins S8 and S17. May interact with IF1 in the 30S initiation complex.

With S4 and S5 plays an important role in translational accuracy. Functionally, interacts with and stabilizes bases of the 16S rRNA that are involved in tRNA selection in the A site and with the mRNA backbone. Located at the interface of the 30S and 50S subunits, it traverses the body of the 30S subunit contacting proteins on the other side and probably holding the rRNA structure together. The combined cluster of proteins S8, S12 and S17 appears to hold together the shoulder and platform of the 30S subunit. This Chlorobium phaeobacteroides (strain BS1) protein is Small ribosomal subunit protein uS12.